The chain runs to 166 residues: Interferon gamma (166 aa).

Positions 1-23 are cleaved as a signal peptide; the sequence is MKYTSYILAFQLCIVLGSLGCYC. Glutamine 24 carries the post-translational modification Pyrrolidone carboxylic acid. N-linked (GlcNAc...) asparagine glycosylation is present at asparagine 48. Asparagine 120 is a glycosylation site (N-linked (GlcNAc...) asparagine; in dimeric form). The tract at residues 147–166 is disordered; sequence AKTGKRKRSQMLFRGRRASQ. Residues 149 to 166 show a composition bias toward basic residues; it reads TGKRKRSQMLFRGRRASQ. Positions 162–166 are excised as a propeptide; sequence RRASQ.

The protein belongs to the type II (or gamma) interferon family. Homodimer. Interacts with IFNGR1 (via extracellular domain); this interaction promotes IFNGR1 dimerization. In terms of processing, proteolytic processing produces C-terminal heterogeneity, with proteins ending alternatively at Gly-150, Met-157 or Gly-161. As to expression, released primarily from activated T lymphocytes.

It is found in the secreted. In terms of biological role, type II interferon produced by immune cells such as T-cells and NK cells that plays crucial roles in antimicrobial, antiviral, and antitumor responses by activating effector immune cells and enhancing antigen presentation. Primarily signals through the JAK-STAT pathway after interaction with its receptor IFNGR1 to affect gene regulation. Upon IFNG binding, IFNGR1 intracellular domain opens out to allow association of downstream signaling components JAK2, JAK1 and STAT1, leading to STAT1 activation, nuclear translocation and transcription of IFNG-regulated genes. Many of the induced genes are transcription factors such as IRF1 that are able to further drive regulation of a next wave of transcription. Plays a role in class I antigen presentation pathway by inducing a replacement of catalytic proteasome subunits with immunoproteasome subunits. In turn, increases the quantity, quality, and repertoire of peptides for class I MHC loading. Increases the efficiency of peptide generation also by inducing the expression of activator PA28 that associates with the proteasome and alters its proteolytic cleavage preference. Up-regulates as well MHC II complexes on the cell surface by promoting expression of several key molecules such as cathepsins B/CTSB, H/CTSH, and L/CTSL. Participates in the regulation of hematopoietic stem cells during development and under homeostatic conditions by affecting their development, quiescence, and differentiation. This Homo sapiens (Human) protein is Interferon gamma (IFNG).